Consider the following 206-residue polypeptide: Molybdopterin synthase catalytic subunit (206 aa).

Residues 1–23 (MATQQPTQTDNSAQAQPPQTNPA) show a composition bias toward polar residues. The interval 1 to 27 (MATQQPTQTDNSAQAQPPQTNPAKPTE) is disordered. Residues 131–132 (HR), lysine 147, and 154–156 (KRE) each bind substrate. Residues 177–188 (KVDEPRIGKGEV) are compositionally biased toward basic and acidic residues. The disordered stretch occupies residues 177-206 (KVDEPRIGKGEVDEKEDEGDSGNGGNDRKS). Positions 197-206 (SGNGGNDRKS) are enriched in gly residues.

The protein belongs to the MoaE family. MOCS2B subfamily. In terms of assembly, heterotetramer; composed of 2 small (MOCS2A) and 2 large (MOCS2B) subunits.

It localises to the cytoplasm. The enzyme catalyses 2 [molybdopterin-synthase sulfur-carrier protein]-C-terminal-Gly-aminoethanethioate + cyclic pyranopterin phosphate + H2O = molybdopterin + 2 [molybdopterin-synthase sulfur-carrier protein]-C-terminal Gly-Gly + 2 H(+). Its pathway is cofactor biosynthesis; molybdopterin biosynthesis. In terms of biological role, catalytic subunit of the molybdopterin synthase complex, a complex that catalyzes the conversion of precursor Z into molybdopterin. Acts by mediating the incorporation of 2 sulfur atoms from thiocarboxylated MOCS2A into precursor Z to generate a dithiolene group. This is Molybdopterin synthase catalytic subunit (nit-8) from Neurospora crassa (strain ATCC 24698 / 74-OR23-1A / CBS 708.71 / DSM 1257 / FGSC 987).